A 206-amino-acid polypeptide reads, in one-letter code: dTTP/UTP pyrophosphatase (206 aa).

Residue Asp-79 is the Proton acceptor of the active site.

The protein belongs to the Maf family. YhdE subfamily. Requires a divalent metal cation as cofactor.

The protein localises to the cytoplasm. It catalyses the reaction dTTP + H2O = dTMP + diphosphate + H(+). The enzyme catalyses UTP + H2O = UMP + diphosphate + H(+). In terms of biological role, nucleoside triphosphate pyrophosphatase that hydrolyzes dTTP and UTP. May have a dual role in cell division arrest and in preventing the incorporation of modified nucleotides into cellular nucleic acids. In Rhizobium johnstonii (strain DSM 114642 / LMG 32736 / 3841) (Rhizobium leguminosarum bv. viciae), this protein is dTTP/UTP pyrophosphatase.